The following is a 537-amino-acid chain: Pheophorbide a oxygenase, chloroplastic (537 aa).

The transit peptide at 1 to 49 (MSVVLLSSTSATITKSQSKKIPFLSPTTKFPLKVSISPSRSKLFHNPLR) directs the protein to the chloroplast. The disordered stretch occupies residues 51 to 77 (AAPPSVPTSDSTEEKRIEEEYGGDKEE). The span at 62 to 77 (TEEKRIEEEYGGDKEE) shows a compositional bias: basic and acidic residues. The Rieske domain occupies 88-200 (WYPVSLVEDL…TMVSQGLLFV (113 aa)). The [2Fe-2S] cluster site is built by Cys-130, His-132, Cys-150, and His-153.

In terms of assembly, interacts with HCAR, SGR1, RCCR, PPH and the LHCII complex. Part of a SGR1-CCE-LHCII complex, which acts in chlorophyll breakdown.

It localises to the plastid. It is found in the chloroplast thylakoid membrane. It catalyses the reaction pheophorbide a + 2 reduced [2Fe-2S]-[ferredoxin] + O2 + 2 H(+) = red chlorophyll catabolite + 2 oxidized [2Fe-2S]-[ferredoxin]. Its pathway is porphyrin-containing compound metabolism; chlorophyll degradation. Its activity is regulated as follows. Might be regulated by a phosphorylation/dephosphorylation mechanism. Catalyzes the key reaction of chlorophyll catabolism, porphyrin macrocycle cleavage of pheophorbide a (pheide a) to a primary fluorescent catabolite (pFCC). Works in a two-step reaction with red chlorophyll catabolite reductase (RCCR). Creates the intermediate RCC through the opening of the porphyrin macrocycle by the introduction of one atom of molecular oxygen at the alpha-methine bridge. Seems to be specific for pheide a. Belongs to the chlorophyll catabolic enzymes (CCEs). The protein is Pheophorbide a oxygenase, chloroplastic (PAO) of Arabidopsis thaliana (Mouse-ear cress).